We begin with the raw amino-acid sequence, 501 residues long: Pyruvate kinase 1 (501 aa).

R50 lines the substrate pocket. The K(+) site is built by N52, S54, D85, and T86. ATP is bound at residue 52-55; sequence NFSH. ATP contacts are provided by R92 and K178. E243 is a binding site for Mg(2+). Residues G266, D267, and T299 each coordinate substrate. D267 is a binding site for Mg(2+).

The protein belongs to the pyruvate kinase family. As to quaternary structure, homotetramer. The cofactor is Mg(2+). K(+) serves as cofactor.

It catalyses the reaction pyruvate + ATP = phosphoenolpyruvate + ADP + H(+). It participates in carbohydrate degradation; glycolysis; pyruvate from D-glyceraldehyde 3-phosphate: step 5/5. The polypeptide is Pyruvate kinase 1 (PYK1) (Candida glabrata (strain ATCC 2001 / BCRC 20586 / JCM 3761 / NBRC 0622 / NRRL Y-65 / CBS 138) (Yeast)).